A 325-amino-acid chain; its full sequence is Bifunctional ligase/repressor BirA (325 aa).

Residues 23–42 (GQKISDALGCSRTAVWKHIE) constitute a DNA-binding region (H-T-H motif). Residues 74–262 (RFGLKTEVMG…CFEKRYRDYM (189 aa)) enclose the BPL/LPL catalytic domain. Residues Gln118, 122 to 124 (RGR), and Lys189 contribute to the biotin site.

Belongs to the biotin--protein ligase family.

The catalysed reaction is biotin + L-lysyl-[protein] + ATP = N(6)-biotinyl-L-lysyl-[protein] + AMP + diphosphate + H(+). In terms of biological role, acts both as a biotin--[acetyl-CoA-carboxylase] ligase and a repressor. In Bacillus subtilis (strain 168), this protein is Bifunctional ligase/repressor BirA.